A 206-amino-acid polypeptide reads, in one-letter code: Small ribosomal subunit protein uS4 (206 aa).

Residues 96–160 enclose the S4 RNA-binding domain; that stretch reads CRLDNVVYRM…AQLRIVQALE (65 aa).

This sequence belongs to the universal ribosomal protein uS4 family. Part of the 30S ribosomal subunit. Contacts protein S5. The interaction surface between S4 and S5 is involved in control of translational fidelity.

One of the primary rRNA binding proteins, it binds directly to 16S rRNA where it nucleates assembly of the body of the 30S subunit. Functionally, with S5 and S12 plays an important role in translational accuracy. In Pseudomonas putida (strain GB-1), this protein is Small ribosomal subunit protein uS4.